The chain runs to 530 residues: UDP-glucuronosyltransferase 2B14 (530 aa).

The signal sequence occupies residues 1 to 24 (MSVKHVSVLLLLLQLSCCFRTGSC). N-linked (GlcNAc...) asparagine glycosylation is found at asparagine 134 and asparagine 316. The chain crosses the membrane as a helical span at residues 494–510 (VVGFLVSCAAFLIFLVI).

This sequence belongs to the UDP-glycosyltransferase family.

The protein localises to the microsome membrane. Its subcellular location is the endoplasmic reticulum membrane. It catalyses the reaction glucuronate acceptor + UDP-alpha-D-glucuronate = acceptor beta-D-glucuronoside + UDP + H(+). UDPGT is of major importance in the conjugation and subsequent elimination of potentially toxic xenobiotics and endogenous compounds. This Oryctolagus cuniculus (Rabbit) protein is UDP-glucuronosyltransferase 2B14 (UGT2B14).